The chain runs to 55 residues: Large ribosomal subunit protein bL33B (55 aa).

The protein belongs to the bacterial ribosomal protein bL33 family.

The chain is Large ribosomal subunit protein bL33B (rpmG2) from Mycobacterium tuberculosis (strain CDC 1551 / Oshkosh).